The sequence spans 253 residues: Histone-arginine methyltransferase METTL23 (253 aa).

Residues 1-23 (MDSVRPRAPWAPPPDPASLDSPT) form a disordered region.

It belongs to the methyltransferase superfamily. METTL23 family. In terms of assembly, interacts with HSPA5, HSP90B1, TUBULIN, UGGT1 and UGGT2. Interacts with TET3. Interacts with STPG4. In terms of tissue distribution, ubiquitously expressed.

The protein localises to the nucleus. The protein resides in the cytoplasm. It catalyses the reaction L-arginyl-[protein] + 2 S-adenosyl-L-methionine = N(omega),N(omega)-dimethyl-L-arginyl-[protein] + 2 S-adenosyl-L-homocysteine + 2 H(+). Histone methyltransferase that dimethylates histone H3 at 'Arg-17', forming asymmetric dimethylarginine (H3R17me2a), leading to activate transcription via chromatin remodeling. Maternal factor involved in epigenetic chromatin reprogramming of the paternal genome in the zygote: mediates H3R17me2a, promoting histone H3.3 incorporation in the male pronucleus, leading to TET3 recruitment and subsequent DNA demethylation. This Mus musculus (Mouse) protein is Histone-arginine methyltransferase METTL23.